Consider the following 424-residue polypeptide: Glutamate-1-semialdehyde 2,1-aminomutase (424 aa).

An N6-(pyridoxal phosphate)lysine modification is found at lysine 265.

Belongs to the class-III pyridoxal-phosphate-dependent aminotransferase family. HemL subfamily. Homodimer. Requires pyridoxal 5'-phosphate as cofactor.

It is found in the cytoplasm. The enzyme catalyses (S)-4-amino-5-oxopentanoate = 5-aminolevulinate. It participates in porphyrin-containing compound metabolism; protoporphyrin-IX biosynthesis; 5-aminolevulinate from L-glutamyl-tRNA(Glu): step 2/2. The sequence is that of Glutamate-1-semialdehyde 2,1-aminomutase from Alkaliphilus oremlandii (strain OhILAs) (Clostridium oremlandii (strain OhILAs)).